Reading from the N-terminus, the 402-residue chain is Nicotinate phosphoribosyltransferase (402 aa).

The residue at position 224 (H224) is a Phosphohistidine; by autocatalysis.

The protein belongs to the NAPRTase family. Transiently phosphorylated on a His residue during the reaction cycle. Phosphorylation strongly increases the affinity for substrates and increases the rate of nicotinate D-ribonucleotide production. Dephosphorylation regenerates the low-affinity form of the enzyme, leading to product release.

The enzyme catalyses nicotinate + 5-phospho-alpha-D-ribose 1-diphosphate + ATP + H2O = nicotinate beta-D-ribonucleotide + ADP + phosphate + diphosphate. The protein operates within cofactor biosynthesis; NAD(+) biosynthesis; nicotinate D-ribonucleotide from nicotinate: step 1/1. Catalyzes the synthesis of beta-nicotinate D-ribonucleotide from nicotinate and 5-phospho-D-ribose 1-phosphate at the expense of ATP. This Neisseria meningitidis serogroup C (strain 053442) protein is Nicotinate phosphoribosyltransferase.